Reading from the N-terminus, the 440-residue chain is Ribulose bisphosphate carboxylase large chain (440 aa).

At K4 the chain carries N6,N6,N6-trimethyllysine. Residues N113 and T163 each coordinate substrate. The active-site Proton acceptor is K165. K167 contributes to the substrate binding site. Mg(2+) contacts are provided by K191, D193, and E194. Position 191 is an N6-carboxylysine (K191). H284 (proton acceptor) is an active-site residue. 3 residues coordinate substrate: R285, H317, and S369.

Belongs to the RuBisCO large chain family. Type I subfamily. Heterohexadecamer of 8 large chains and 8 small chains; disulfide-linked. The disulfide link is formed within the large subunit homodimers. The cofactor is Mg(2+). The disulfide bond which can form in the large chain dimeric partners within the hexadecamer appears to be associated with oxidative stress and protein turnover.

The protein resides in the plastid. It is found in the chloroplast. It catalyses the reaction 2 (2R)-3-phosphoglycerate + 2 H(+) = D-ribulose 1,5-bisphosphate + CO2 + H2O. The enzyme catalyses D-ribulose 1,5-bisphosphate + O2 = 2-phosphoglycolate + (2R)-3-phosphoglycerate + 2 H(+). Functionally, ruBisCO catalyzes two reactions: the carboxylation of D-ribulose 1,5-bisphosphate, the primary event in carbon dioxide fixation, as well as the oxidative fragmentation of the pentose substrate in the photorespiration process. Both reactions occur simultaneously and in competition at the same active site. This is Ribulose bisphosphate carboxylase large chain from Pteris vittata (Chinese ladder brake).